The sequence spans 172 residues: ATP synthase subunit b (172 aa).

The helical transmembrane segment at 27–47 (LAIVIFGLYKFLPPFIGGILE) threads the bilayer.

This sequence belongs to the ATPase B chain family. In terms of assembly, F-type ATPases have 2 components, F(1) - the catalytic core - and F(0) - the membrane proton channel. F(1) has five subunits: alpha(3), beta(3), gamma(1), delta(1), epsilon(1). F(0) has four main subunits: a(1), b(1), b'(1) and c(10-14). The alpha and beta chains form an alternating ring which encloses part of the gamma chain. F(1) is attached to F(0) by a central stalk formed by the gamma and epsilon chains, while a peripheral stalk is formed by the delta, b and b' chains.

It is found in the cellular thylakoid membrane. F(1)F(0) ATP synthase produces ATP from ADP in the presence of a proton or sodium gradient. F-type ATPases consist of two structural domains, F(1) containing the extramembraneous catalytic core and F(0) containing the membrane proton channel, linked together by a central stalk and a peripheral stalk. During catalysis, ATP synthesis in the catalytic domain of F(1) is coupled via a rotary mechanism of the central stalk subunits to proton translocation. Functionally, component of the F(0) channel, it forms part of the peripheral stalk, linking F(1) to F(0). This is ATP synthase subunit b from Prochlorococcus marinus (strain MIT 9313).